The chain runs to 261 residues: Glutathione S-transferase theta-1 (261 aa).

The GST N-terminal domain occupies 2–101 (GLELYLDLLS…YLSRKYNTPD (100 aa)). Glutathione-binding positions include 72–73 (KV) and 85–86 (EC). The GST C-terminal domain maps to 107 to 248 (DIKKRAQVDE…LSNIQIDPQL (142 aa)).

This sequence belongs to the GST superfamily. Theta family. Homodimer.

Its subcellular location is the cytoplasm. The enzyme catalyses RX + glutathione = an S-substituted glutathione + a halide anion + H(+). Functionally, conjugation of reduced glutathione to a wide number of exogenous and endogenous hydrophobic electrophiles. This is Glutathione S-transferase theta-1 (GSTT1) from Gallus gallus (Chicken).